Consider the following 90-residue polypeptide: UPF0329 protein ECU04_1650 (90 aa).

This sequence belongs to the UPF0329 family.

In Encephalitozoon cuniculi (strain GB-M1) (Microsporidian parasite), this protein is UPF0329 protein ECU04_1650.